Consider the following 620-residue polypeptide: LEAF RUST 10 DISEASE-RESISTANCE LOCUS RECEPTOR-LIKE PROTEIN KINASE-like 2.3 (620 aa).

Positions 1–30 (MDSLSSMGFQTASFFLILLFLFYHLPCVPS) are cleaved as a signal peptide. The Extracellular segment spans residues 31–256 (QQERSRLCKP…NNGTYSDNRP (226 aa)). N-linked (GlcNAc...) asparagine glycosylation is found at Asn75, Asn85, Asn93, Asn132, Asn148, Asn162, Asn189, Asn231, and Asn248. Residues 257 to 277 (FLVTIGTVLGSILCVCVVLFL) form a helical membrane-spanning segment. The Cytoplasmic segment spans residues 278–620 (AFYLNERRIA…SVESSIYSEV (343 aa)). In terms of domain architecture, Protein kinase spans 314–596 (KSFTEVVGRG…SLDPPPKPLL (283 aa)). ATP contacts are provided by residues 320-328 (VGRGGFGTV) and Lys342. Catalysis depends on Asp431, which acts as the Proton acceptor. The disordered stretch occupies residues 586-620 (DSLDPPPKPLLHMPMQNNNAESSQLSVESSIYSEV). A compositionally biased stretch (polar residues) spans 600–620 (MQNNNAESSQLSVESSIYSEV).

It belongs to the protein kinase superfamily. Ser/Thr protein kinase family.

The protein localises to the membrane. It catalyses the reaction L-seryl-[protein] + ATP = O-phospho-L-seryl-[protein] + ADP + H(+). It carries out the reaction L-threonyl-[protein] + ATP = O-phospho-L-threonyl-[protein] + ADP + H(+). The sequence is that of LEAF RUST 10 DISEASE-RESISTANCE LOCUS RECEPTOR-LIKE PROTEIN KINASE-like 2.3 from Arabidopsis thaliana (Mouse-ear cress).